Consider the following 1006-residue polypeptide: Probable beta-galactosidase A (1006 aa).

Residues 1-18 form the signal peptide; sequence MKLLSVCAVALLAAQAAG. Residues Tyr96, Asn140, Ala141, and Glu142 each contribute to the substrate site. The N-linked (GlcNAc...) asparagine glycan is linked to Asn156. Asn199 is a binding site for substrate. Catalysis depends on Glu200, which acts as the Proton donor. Cys205 and Cys206 are oxidised to a cystine. N-linked (GlcNAc...) asparagine glycosylation is present at Asn207. Tyr260 is a substrate binding site. Cys266 and Cys315 are oxidised to a cystine. Glu298 acts as the Nucleophile in catalysis. Substrate is bound at residue Tyr364. N-linked (GlcNAc...) asparagine glycosylation is found at Asn373, Asn402, Asn422, Asn622, Asn777, and Asn914.

It belongs to the glycosyl hydrolase 35 family.

The protein resides in the secreted. It catalyses the reaction Hydrolysis of terminal non-reducing beta-D-galactose residues in beta-D-galactosides.. Cleaves beta-linked terminal galactosyl residues from gangliosides, glycoproteins, and glycosaminoglycans. This is Probable beta-galactosidase A (lacA) from Neosartorya fischeri (strain ATCC 1020 / DSM 3700 / CBS 544.65 / FGSC A1164 / JCM 1740 / NRRL 181 / WB 181) (Aspergillus fischerianus).